A 318-amino-acid polypeptide reads, in one-letter code: Porphobilinogen deaminase (318 aa).

At Cys241 the chain carries S-(dipyrrolylmethanemethyl)cysteine.

This sequence belongs to the HMBS family. As to quaternary structure, monomer. Dipyrromethane is required as a cofactor.

The catalysed reaction is 4 porphobilinogen + H2O = hydroxymethylbilane + 4 NH4(+). It participates in porphyrin-containing compound metabolism; protoporphyrin-IX biosynthesis; coproporphyrinogen-III from 5-aminolevulinate: step 2/4. Tetrapolymerization of the monopyrrole PBG into the hydroxymethylbilane pre-uroporphyrinogen in several discrete steps. The chain is Porphobilinogen deaminase from Geotalea daltonii (strain DSM 22248 / JCM 15807 / FRC-32) (Geobacter daltonii).